Reading from the N-terminus, the 941-residue chain is Gamma-aminobutyric acid type B receptor subunit 2 (941 aa).

Residues 1 to 41 form the signal peptide; sequence MASPRSSGQPGPPPPPPPPPARLLLLLLLPLLLPLAPGAWG. At 42–483 the chain is on the extracellular side; that stretch reads WARGAPRPPP…LRKISLPLYS (442 aa). Asn90 carries an N-linked (GlcNAc...) asparagine glycan. Disulfide bonds link Cys108–Cys135, Cys237–Cys266, and Cys265–Cys302. N-linked (GlcNAc...) asparagine glycans are attached at residues Asn298, Asn389, Asn404, and Asn453. The chain crosses the membrane as a helical span at residues 484 to 504; it reads ILSALTILGMIMASAFLFFNI. Residues 505–522 lie on the Cytoplasmic side of the membrane; that stretch reads KNRNQKLIKMSSPYMNNL. A helical transmembrane segment spans residues 523–543; that stretch reads IILGGMLSYASIFLFGLDGSF. Residues 544–551 are Extracellular-facing; it reads VSEKTFET. The helical transmembrane segment at 552–572 threads the bilayer; sequence LCTVRTWILTVGYTTAFGAMF. The Cytoplasmic portion of the chain corresponds to 573 to 597; it reads AKTWRVHAIFKNVKMKKKIIKDQKL. A helical membrane pass occupies residues 598–618; that stretch reads LVIVGGMLLIDLCILICWQAV. Over 619–654 the chain is Extracellular; sequence DPLRRTVEKYSMEPDPAGRDISIRPLLEHCENTHMT. A helical membrane pass occupies residues 655 to 675; that stretch reads IWLGIVYAYKGLLMLFGCFLA. At 676 to 691 the chain is on the cytoplasmic side; the sequence is WETRNVSIPALNDSKY. The helical transmembrane segment at 692–712 threads the bilayer; it reads IGMSVYNVGIMCIIGAAVSFL. Residues 713 to 720 lie on the Extracellular side of the membrane; sequence TRDQPNVQ. The chain crosses the membrane as a helical span at residues 721–741; sequence FCIVALVIIFCSTITLCLVFV. Residues 742–941 are Cytoplasmic-facing; it reads PKLITLRTNP…PSFRVMVSGL (200 aa). A disordered region spans residues 763-790; sequence TQNQKKEDSKTSTSVTSVNQASTSRLEG. Over residues 773-787 the composition is skewed to polar residues; sequence TSTSVTSVNQASTSR. Phosphoserine is present on residues Ser776 and Ser779. Residues 781 to 819 adopt a coiled-coil conformation; the sequence is NQASTSRLEGLQSENHRLRMKITELDKDLEEVTMQLQDT. Thr819 carries the phosphothreonine modification. Phosphoserine is present on residues Ser884, Ser893, Ser913, Ser916, Ser920, and Ser924.

Belongs to the G-protein coupled receptor 3 family. GABA-B receptor subfamily. As to quaternary structure, heterodimer of GABBR1 and GABBR2. Homodimers may form, but are inactive. Interacts (via C-terminus) with ATF4 (via leucine zipper domain). As to expression, highly expressed in brain, especially in cerebral cortex, thalamus, hippocampus, frontal, occipital and temporal lobe, occipital pole and cerebellum, followed by corpus callosum, caudate nucleus, spinal cord, amygdala and medulla. Weakly expressed in heart, testis and skeletal muscle.

It localises to the cell membrane. The protein localises to the postsynaptic cell membrane. Its function is as follows. Component of a heterodimeric G-protein coupled receptor for GABA, formed by GABBR1 and GABBR2. Within the heterodimeric GABA receptor, only GABBR1 seems to bind agonists, while GABBR2 mediates coupling to G proteins. Ligand binding causes a conformation change that triggers signaling via guanine nucleotide-binding proteins (G proteins) and modulates the activity of down-stream effectors, such as adenylate cyclase. Signaling inhibits adenylate cyclase, stimulates phospholipase A2, activates potassium channels, inactivates voltage-dependent calcium-channels and modulates inositol phospholipid hydrolysis. Plays a critical role in the fine-tuning of inhibitory synaptic transmission. Pre-synaptic GABA receptor inhibits neurotransmitter release by down-regulating high-voltage activated calcium channels, whereas postsynaptic GABA receptor decreases neuronal excitability by activating a prominent inwardly rectifying potassium (Kir) conductance that underlies the late inhibitory postsynaptic potentials. Not only implicated in synaptic inhibition but also in hippocampal long-term potentiation, slow wave sleep, muscle relaxation and antinociception. This is Gamma-aminobutyric acid type B receptor subunit 2 (GABBR2) from Homo sapiens (Human).